The primary structure comprises 313 residues: Type II restriction enzyme BsuMI component YdiR (313 aa).

Residues 289–313 form a disordered region; it reads FVSGDIVDENATTSSDDLPEDFENN.

In terms of assembly, bsuMI restriction activity requires YdiR, YdiS and YdjA.

It catalyses the reaction Endonucleolytic cleavage of DNA to give specific double-stranded fragments with terminal 5'-phosphates.. Functionally, a P subtype restriction enzyme that recognizes the double-stranded sequence 5'-CTCGAG-3'; the cleavage site is unknown. In Bacillus subtilis (strain 168), this protein is Type II restriction enzyme BsuMI component YdiR (ydiR).